A 124-amino-acid polypeptide reads, in one-letter code: UPF0235 protein (124 aa).

Residues 1 to 22 (MTKKGSSNSSKQQQQQQQIIIN) are disordered.

It belongs to the UPF0235 family.

The chain is UPF0235 protein from Dictyostelium discoideum (Social amoeba).